The sequence spans 385 residues: Sensor histidine kinase Hik2 (385 aa).

The GAF domain maps to 11-131; it reads ALCRTQLELV…QQVAQTLAIA (121 aa). Cys-13 contributes to the [3Fe-4S] cluster binding site. The interval 142–270 is DHp domain, may sense NaCl; sequence SHSPAQPLDQ…PQLPPIWLEE (129 aa). The Histidine kinase domain occupies 158 to 381; sequence DLLHQLRNPV…AFTLAIPWQM (224 aa). Residue His-161 is modified to Phosphohistidine; by autocatalysis.

The protein belongs to the chloroplast sensor kinase protein family. In terms of assembly, hexamers; upon treatment with 0.5 M NaCl only tetramers are seen. The tetramers are probably inactive. Requires [3Fe-4S] cluster as cofactor. Autophosphorylates, possibly on His-161.

It carries out the reaction ATP + protein L-histidine = ADP + protein N-phospho-L-histidine.. Its function is as follows. Member of 2 two-component regulatory system(s) Hik2/Rre1 and Hik2/RppA. Transduces PQ (plastoquinone) redox signals to photosystem gene expression machinery during the adjustment of photosystem stoichiometry. Reduced PQ suppresses its autophosphorylation activity (i.e. kinase activity is higher under oxidizing conditions). As part of a two-component regulatory system with Rre1, controls expression of sigB and several other genes in response to hyperosmotic stress. May transfer phosphate to RppA in a possible Hik2/RppA two-component system. In Thermosynechococcus vestitus (strain NIES-2133 / IAM M-273 / BP-1), this protein is Sensor histidine kinase Hik2.